A 246-amino-acid chain; its full sequence is DNA repair protein RecO (246 aa).

This sequence belongs to the RecO family.

In terms of biological role, involved in DNA repair and RecF pathway recombination. The polypeptide is DNA repair protein RecO (Alkaliphilus metalliredigens (strain QYMF)).